The chain runs to 441 residues: Tol-Pal system protein TolB (441 aa).

Residues 1–25 (MRIFFFAYVLPTVISLLLGCQGAIA) form the signal peptide.

This sequence belongs to the TolB family. The Tol-Pal system is composed of five core proteins: the inner membrane proteins TolA, TolQ and TolR, the periplasmic protein TolB and the outer membrane protein Pal. They form a network linking the inner and outer membranes and the peptidoglycan layer.

The protein localises to the periplasm. Functionally, part of the Tol-Pal system, which plays a role in outer membrane invagination during cell division and is important for maintaining outer membrane integrity. This Anaplasma marginale (strain St. Maries) protein is Tol-Pal system protein TolB.